A 289-amino-acid polypeptide reads, in one-letter code: Nodulation protein NolT (289 aa).

The first 33 residues, 1-33 (MFGSAHGDTTSSDTSGRRPLRLVVLPLLLALSS), serve as a signal peptide directing secretion. Residue Cys34 is the site of N-palmitoyl cysteine attachment. Cys34 is lipidated: S-diacylglycerol cysteine. A helical transmembrane segment spans residues 233 to 253 (VAVGVSAAVFAVTCYLLFIVL).

Belongs to the YscJ lipoprotein family.

It localises to the cell outer membrane. This is Nodulation protein NolT (nolT) from Sinorhizobium fredii (strain NBRC 101917 / NGR234).